We begin with the raw amino-acid sequence, 242 residues long: Sugar fermentation stimulation protein homolog (242 aa).

This sequence belongs to the SfsA family.

This Nitratidesulfovibrio vulgaris (strain DP4) (Desulfovibrio vulgaris) protein is Sugar fermentation stimulation protein homolog.